The sequence spans 161 residues: Protein-export protein SecB (161 aa).

A disordered region spans residues 141–161; that stretch reads KKQQETAGEQPDQPADTITRH.

Belongs to the SecB family. Homotetramer, a dimer of dimers. One homotetramer interacts with 1 SecA dimer.

It is found in the cytoplasm. In terms of biological role, one of the proteins required for the normal export of preproteins out of the cell cytoplasm. It is a molecular chaperone that binds to a subset of precursor proteins, maintaining them in a translocation-competent state. It also specifically binds to its receptor SecA. This chain is Protein-export protein SecB, found in Nitrosomonas europaea (strain ATCC 19718 / CIP 103999 / KCTC 2705 / NBRC 14298).